A 265-amino-acid chain; its full sequence is Mlc titration factor A (265 aa).

Residues histidine 111, histidine 148, histidine 152, and glutamate 211 each coordinate Zn(2+).

This sequence belongs to the MtfA family. In terms of assembly, interacts with Mlc. Requires Zn(2+) as cofactor.

The protein resides in the cytoplasm. Functionally, involved in the modulation of the activity of the glucose-phosphotransferase system (glucose-PTS). Interacts with the transcriptional repressor Mlc, preventing its interaction with DNA and leading to the modulation of expression of genes regulated by Mlc, including ptsG, which encodes the PTS system glucose-specific EIICB component. Its function is as follows. Shows zinc-dependent metallopeptidase activity. In Salmonella schwarzengrund (strain CVM19633), this protein is Mlc titration factor A.